A 554-amino-acid chain; its full sequence is Outer envelope protein 61 (554 aa).

At 1–525 (MFNGLMDPEM…GMEKAKKAKK (525 aa)) the chain is on the cytoplasmic side. TPR repeat units follow at residues 103–136 (AQMLKKQGNELHSRGNFSDAAEKYLRAKNNLKEI) and 180–213 (VKALYRRGQAYRDLGLFEDAVSDLSKAHEVSPED). Disordered stretches follow at residues 245–269 (TEENNVTSGENKKPSKEANGHAQGV) and 395–439 (APAS…PSAP). The segment covering 254–263 (ENKKPSKEAN) has biased composition (basic and acidic residues). The segment covering 412–423 (SLGASGSSSGNS) has biased composition (low complexity). Residues 526-546 (WLFGKGGLIFAILMLVLAMVL) traverse the membrane as a helical segment. Over 547 to 554 (HRLGYIGN) the chain is Lumenal.

In terms of assembly, interacts (via TPR region) with HSP70-1, but not with HSP90-2. Interacts with ERDJ2A and ERDJ2B. In the ER membrane, associates with ERDJ2 in membrane complexes of 140 and 200 kDa and specifically interacts with the HSP70 and HSP90 chaperones via its TPR domain. As to expression, ubiquitous. Highest expression in leaves and lowest in roots.

The protein localises to the endoplasmic reticulum membrane. The protein resides in the plastid. It is found in the chloroplast outer membrane. Its function is as follows. Plays a role in protein import into the endoplasmic reticulum (ER). May function as chaperone docking protein during post-translational protein translocation into the ER. Chaperone receptor mediating Hsp70-dependent protein targeting to chloroplasts. Interacts specifically with some chloroplast precursors, but not with mitochondrial precursors. Able to select precursors for delivery to the chloroplast translocase independently of Hsp70. In Arabidopsis thaliana (Mouse-ear cress), this protein is Outer envelope protein 61 (OEP61).